We begin with the raw amino-acid sequence, 71 residues long: uncharacterized protein (71 aa).

Residues 12 to 32 (FLVSIAFFGLAPTIPLLAIAL) traverse the membrane as a helical segment.

It localises to the membrane. This is an uncharacterized protein from Sinorhizobium fredii (strain NBRC 101917 / NGR234).